The primary structure comprises 632 residues: 2-hydroxyacyl-CoA lyase 2 (632 aa).

A helical membrane pass occupies residues 13-33; sequence LFPSFLLLACGTLVAALLGAA. Position 98 (Glu-98) interacts with thiamine diphosphate. A thiamine pyrophosphate binding region spans residues 470–550; it reads DFVGTAAHLV…VMALVGNDAG (81 aa). The Mg(2+) site is built by Asp-521 and Asn-547.

The protein belongs to the TPP enzyme family. Mg(2+) is required as a cofactor. It depends on thiamine diphosphate as a cofactor. Expressed in all tissues tested, with highest expression in heart, pancreas and placenta.

Its subcellular location is the endoplasmic reticulum membrane. It catalyses the reaction 2-hydroxyoctadecanoyl-CoA = heptadecanal + formyl-CoA. It carries out the reaction (2R)-hydroxyhexadecanoyl-CoA = pentadecanal + formyl-CoA. In terms of biological role, endoplasmic reticulum 2-OH acyl-CoA lyase involved in the cleavage (C1 removal) reaction in the fatty acid alpha-oxydation in a thiamine pyrophosphate (TPP)-dependent manner. Involved in the phytosphingosine degradation pathway. The chain is 2-hydroxyacyl-CoA lyase 2 from Homo sapiens (Human).